A 124-amino-acid chain; its full sequence is Large ribosomal subunit protein bL12 (124 aa).

The protein belongs to the bacterial ribosomal protein bL12 family. Homodimer. Part of the ribosomal stalk of the 50S ribosomal subunit. Forms a multimeric L10(L12)X complex, where L10 forms an elongated spine to which 2 to 4 L12 dimers bind in a sequential fashion. Binds GTP-bound translation factors.

Its function is as follows. Forms part of the ribosomal stalk which helps the ribosome interact with GTP-bound translation factors. Is thus essential for accurate translation. In Borreliella burgdorferi (strain ZS7) (Borrelia burgdorferi), this protein is Large ribosomal subunit protein bL12.